Consider the following 186-residue polypeptide: Zein-alpha PZ19.1 (186 aa).

The first 21 residues, 1-21, serve as a signal peptide directing secretion; sequence MAAKIFCLIMLLGLSASAATA.

This sequence belongs to the zein family.

Zeins are major seed storage proteins. The chain is Zein-alpha PZ19.1 from Zea mays (Maize).